Here is a 95-residue protein sequence, read N- to C-terminus: uncharacterized protein (95 aa).

Residues 1–22 (MLPGFTMIITSLLLTFFREVEH) form the signal peptide. Residues 23–52 (LLPECLTITNTPQRTLVLIQRFTLLQKVMT) lie on the Extracellular side of the membrane. Residues 53–69 (IHLLLSIGTLGSLFTLH) traverse the membrane as a helical segment. Residues 70–95 (PQLLKTNLLQKLHKELNSNLDYLISC) lie on the Cytoplasmic side of the membrane.

Its subcellular location is the host membrane. This is an uncharacterized protein from Acidianus bottle-shaped virus (isolate Italy/Pozzuoli) (ABV).